The sequence spans 504 residues: MALWRTNDSKVYLPPAPVSRIVNTEEYITRTGIYYYAGSSRLITLGHPYFPIPKTSTRAAIPKVSAFQYRVFRVQLPDPNKFGLPDPNLYNPDTDRLVWGCVGVEVGRGQPLGVGLSGHPLFNKYDDTENSRIANGNAQQDVRDNTSVDNKQTQLCIIGCAPPIGEHWGIGTTCKNTPVPPGDCPPLELVSSVIQDGDMIDTGFGAMDFAALQATKSDVPLDISQSVCKYPDYLKMSADTYGNSMFFHLRREQIFARHYYNKLVGVGEDIPNDYYIKGSGNGRDPIESYIYSATPSGSMITSDSQIFNKPYWLHRAQGHNNGICWNNQLFITCVDTTRSTNLTISTATAAVSPTFTPSNFKQYIRHGEEYELQFIFQLCKITLTTEVMAYLHTMDPTILEQWNFGLTLPPSASLEDAYRFVRNAATSCQKDTPPQAKPDPLAKYKFWDVDLKERFSLDLDQFALGRKFLLQVGVQRKPRPGLKRPASSASSSSSSSAKRKRVKK.

The segment at 476–504 is disordered; sequence RKPRPGLKRPASSASSSSSSSAKRKRVKK. Residues 486–496 are compositionally biased toward low complexity; the sequence is ASSASSSSSSS.

This sequence belongs to the papillomaviridae L1 protein family. Self-assembles into homopentamers. The capsid has an icosahedral symmetry and consists of 72 capsomers, with each capsomer being a pentamer of L1. Interacts with the minor capsid protein L2; this interaction is necessary for viral genome encapsidation. Interacts with protein E2; this interaction enhances E2-dependent replication and transcription activation.

The protein resides in the virion. Its subcellular location is the host nucleus. Forms an icosahedral capsid with a T=7 symmetry and a 50 nm diameter. The capsid is composed of 72 pentamers linked to each other by disulfide bonds and associated with L2 proteins. Binds to heparan sulfate proteoglycans on cell surface of basal layer keratinocytes to provide initial virion attachment. This binding mediates a conformational change in the virus capsid that facilitates efficient infection. The virion enters the host cell via endocytosis. During virus trafficking, L1 protein dissociates from the viral DNA and the genomic DNA is released to the host nucleus. The virion assembly takes place within the cell nucleus. Encapsulates the genomic DNA together with protein L2. This Homo sapiens (Human) protein is Major capsid protein L1.